The primary structure comprises 344 residues: Dihydroorotate dehydrogenase (quinone) (344 aa).

FMN contacts are provided by residues 64–68 (AGLDK) and Thr-88. Substrate is bound at residue Lys-68. Position 113–117 (113–117 (NRMGF)) interacts with substrate. FMN-binding residues include Asn-144 and Asn-177. Asn-177 contacts substrate. Ser-180 acts as the Nucleophile in catalysis. Asn-182 is a substrate binding site. The FMN site is built by Lys-222 and Thr-250. Substrate is bound at residue 251 to 252 (NT). Residues Gly-273, Gly-302, and 323–324 (YS) each bind FMN.

It belongs to the dihydroorotate dehydrogenase family. Type 2 subfamily. In terms of assembly, monomer. FMN is required as a cofactor.

The protein resides in the cell membrane. It catalyses the reaction (S)-dihydroorotate + a quinone = orotate + a quinol. It functions in the pathway pyrimidine metabolism; UMP biosynthesis via de novo pathway; orotate from (S)-dihydroorotate (quinone route): step 1/1. Catalyzes the conversion of dihydroorotate to orotate with quinone as electron acceptor. The sequence is that of Dihydroorotate dehydrogenase (quinone) from Polynucleobacter asymbioticus (strain DSM 18221 / CIP 109841 / QLW-P1DMWA-1) (Polynucleobacter necessarius subsp. asymbioticus).